The sequence spans 397 residues: Elongation factor Tu (397 aa).

The tr-type G domain occupies Lys10–Glu206. Residues Gly19–Thr26 are G1. Gly19 to Thr26 lines the GTP pocket. Thr26 contributes to the Mg(2+) binding site. The interval Gly61 to Ser65 is G2. The tract at residues Asp82–Gly85 is G3. Residues Asp82–His86 and Asn137–Asp140 contribute to the GTP site. Residues Asn137–Asp140 form a G4 region. Residues Ser175–Leu177 are G5.

Belongs to the TRAFAC class translation factor GTPase superfamily. Classic translation factor GTPase family. EF-Tu/EF-1A subfamily. In terms of assembly, monomer.

It localises to the cytoplasm. The enzyme catalyses GTP + H2O = GDP + phosphate + H(+). GTP hydrolase that promotes the GTP-dependent binding of aminoacyl-tRNA to the A-site of ribosomes during protein biosynthesis. This is Elongation factor Tu from Lachnospira eligens (strain ATCC 27750 / DSM 3376 / VPI C15-48 / C15-B4) (Eubacterium eligens).